The following is a 249-amino-acid chain: Protein LicA homolog (249 aa).

The protein belongs to the peptidase S49 family.

This is Protein LicA homolog (licA) from Metamycoplasma hominis (strain ATCC 23114 / DSM 25592 / NBRC 14850 / NCTC 10111 / PG21) (Mycoplasma hominis).